Consider the following 342-residue polypeptide: Endolytic peptidoglycan transglycosylase RlpA (342 aa).

Residues 1–26 (MSKRVRSSLILPAVCGLGLAAVLLSS) form the signal peptide. Residue cysteine 27 is the site of N-palmitoyl cysteine attachment. Residue cysteine 27 is the site of S-diacylglycerol cysteine attachment. Positions 261-342 (SLPADGLYLQ…LGQPTLVRPD (82 aa)) constitute an SPOR domain.

This sequence belongs to the RlpA family.

The protein localises to the cell membrane. In terms of biological role, lytic transglycosylase with a strong preference for naked glycan strands that lack stem peptides. The polypeptide is Endolytic peptidoglycan transglycosylase RlpA (Pseudomonas aeruginosa (strain ATCC 15692 / DSM 22644 / CIP 104116 / JCM 14847 / LMG 12228 / 1C / PRS 101 / PAO1)).